A 122-amino-acid polypeptide reads, in one-letter code: Large ribosomal subunit protein uL18 (122 aa).

It belongs to the universal ribosomal protein uL18 family. In terms of assembly, part of the 50S ribosomal subunit; part of the 5S rRNA/L5/L18/L25 subcomplex. Contacts the 5S and 23S rRNAs.

In terms of biological role, this is one of the proteins that bind and probably mediate the attachment of the 5S RNA into the large ribosomal subunit, where it forms part of the central protuberance. The sequence is that of Large ribosomal subunit protein uL18 from Leptospira biflexa serovar Patoc (strain Patoc 1 / Ames).